We begin with the raw amino-acid sequence, 409 residues long: Broad specificity amino-acid racemase (409 aa).

The first 25 residues, Met-1–Ala-25, serve as a signal peptide directing secretion. Cys-72 and Cys-98 are oxidised to a cystine. Lys-76 acts as the Proton acceptor in catalysis. The residue at position 76 (Lys-76) is an N6-(pyridoxal phosphate)lysine. Arg-175 lines the substrate pocket. The Proton acceptor role is filled by Tyr-301. Met-349 contributes to the substrate binding site.

The protein belongs to the alanine racemase family. Bsr subfamily. Requires pyridoxal 5'-phosphate as cofactor.

Its subcellular location is the periplasm. The enzyme catalyses an L-alpha-amino acid = a D-alpha-amino acid. It catalyses the reaction L-lysine = D-lysine. The catalysed reaction is L-arginine = D-arginine. Amino-acid racemase able to utilize a broad range of substrates. The chain is Broad specificity amino-acid racemase from Vibrio parahaemolyticus serotype O3:K6 (strain RIMD 2210633).